The chain runs to 60 residues: Mastoparan-VT5 (60 aa).

The N-terminal stretch at 1 to 27 (MKNTILILFTAFIALLGFFGMIAEPLA) is a signal peptide. AXPX repeat units follow at residues 27 to 30 (ADPL), 31 to 34 (ADPL), 37 to 40 (ADPD), and 41 to 44 (ADPE). Residues 28-45 (DPLADPLPDADPDADPET) constitute a propeptide that is removed on maturation.

It belongs to the MCD family. Mastoparan subfamily. As to expression, expressed by the venom gland.

It is found in the secreted. Functionally, the synthetic peptide shows weak antimicrobial activities against a few Gram-positive bacteria (only 2 on the 11 strains tested) and the fungus C.albicans. Does not show activity against all the Gram-negative bacteria tested. Exhibits little hemolytic activity against washed human erythrocytes. In Vespa tropica (Greater banded hornet), this protein is Mastoparan-VT5.